The following is a 225-amino-acid chain: Ribonuclease 3 (225 aa).

The region spanning 7-129 (IPRLCRTLGY…IIGAIYLDSD (123 aa)) is the RNase III domain. Glutamate 42 is a binding site for Mg(2+). Aspartate 46 is a catalytic residue. 2 residues coordinate Mg(2+): aspartate 115 and glutamate 118. Residue glutamate 118 is part of the active site. In terms of domain architecture, DRBM spans 155 to 225 (DPKTLLQEHL…AAQVLELIKK (71 aa)).

Belongs to the ribonuclease III family. As to quaternary structure, homodimer. Mg(2+) is required as a cofactor.

It localises to the cytoplasm. It carries out the reaction Endonucleolytic cleavage to 5'-phosphomonoester.. Functionally, digests double-stranded RNA. Involved in the processing of primary rRNA transcript to yield the immediate precursors to the large and small rRNAs (23S and 16S). Processes some mRNAs, and tRNAs when they are encoded in the rRNA operon. Processes pre-crRNA and tracrRNA of type II CRISPR loci if present in the organism. In Shewanella piezotolerans (strain WP3 / JCM 13877), this protein is Ribonuclease 3.